Consider the following 346-residue polypeptide: DNA-directed RNA polymerases I and III subunit RPAC1 (346 aa).

A2 carries the post-translational modification N-acetylalanine.

The protein belongs to the archaeal Rpo3/eukaryotic RPB3 RNA polymerase subunit family. As to quaternary structure, component of the RNA polymerase I and RNA polymerase III complexes consisting of at least 13 and 17 subunits, respectively. Pol I complex consists of a ten-subunit catalytic core composed of POLR1A/RPA1, POLR1B/RPA2, POLR1C/RPAC1, POLR1D/RPAC2, POLR1H/RPA12, POLR2E/RPABC1, POLR2F/RPABC2, POLR2H/RPABC3, POLR2K/RPABC4 and POLR2L/RPABC5; a mobile stalk subunit POLR1F/RPA43 protruding from the core and additional subunits homologous to general transcription factors POLR1E/RPA49 and POLR1G/RPA34. Part of Pol I pre-initiation complex (PIC), in which Pol I core assembles with RRN3 and promoter-bound UTBF and SL1/TIF-IB complex. Pol III complex consists of a ten-subunit catalytic core composed of POLR3A/RPC1, POLR3B/RPC2, POLR1C/RPAC1, POLR1D/RPAC2, POLR3K/RPC10, POLR2E/RPABC1, POLR2F/RPABC2, POLR2H/RPABC3, POLR2K/RPABC4 and POLR2L/RPABC5; a mobile stalk composed of two subunits POLR3H/RPC8 and CRCP/RPC9, protruding from the core and functioning primarily in transcription initiation; and additional subunits homologous to general transcription factors of the RNA polymerase II machinery, POLR3C/RPC3-POLR3F/RPC6-POLR3G/RPC7 heterotrimer required for transcription initiation and POLR3D/RPC4-POLR3E/RPC5 heterodimer involved in both transcription initiation and termination.

It is found in the nucleus. It localises to the cytoplasm. The protein localises to the cytosol. DNA-dependent RNA polymerase catalyzes the transcription of DNA into RNA using the four ribonucleoside triphosphates as substrates. Common component of RNA polymerases I and III which synthesize ribosomal RNA precursors and short non-coding RNAs including 5S rRNA, snRNAs, tRNAs and miRNAs, respectively. POLR1C/RPAC1 is part of the polymerase core and may function as a clamp element that moves to open and close the cleft. This is DNA-directed RNA polymerases I and III subunit RPAC1 (POLR1C) from Bos taurus (Bovine).